The primary structure comprises 87 residues: Diazepam-binding inhibitor-like 5 (87 aa).

The 86-residue stretch at 2 to 87 folds into the ACB domain; sequence SQVEFEMACA…VEELKKKEPC (86 aa). An acyl-CoA is bound by residues 29–33, Lys-55, and Tyr-74; that span reads YSFYK.

Belongs to the ACBP family. As to expression, exclusively expressed in late spermatids and spermatozoa. Not found in epididymis, spleen, bone marrow, skin, liver, brain, heart, kidney, muscle.

Its subcellular location is the cytoplasm. In terms of biological role, may be involved in the energy metabolism of the mature sperm. This is Diazepam-binding inhibitor-like 5 (Dbil5) from Mus musculus (Mouse).